The following is a 410-amino-acid chain: MALVNEHFLKLPGSYLFSDIAKKVNTFKITHPKRDIIRLGIGDVTRPLPKACIEAMHKAVEEMTSAETFRGYGPEQGYDFLIEAIIKNDYAPRGIHLSPTEVFVNDGAKSDTGNIGDILRHDNSVGVTDPIYPVYIDSNVMCGRAGVLDTESGKWSNVTYMPCTAENHFIPAIPEKRIDIVYLCYPNNPTGTTLTKAELKKWVDYALANDTLILFDAAYEAYIREPDIPHSIYEIKGAKKCAIEFRSFSKTAGFTGVRCGYTVVPKELTAATLEGERIPLNRLWNRRQCTKFNGTSYITQRAAEAIYTPEGKEQIQETINYYMTNARIMKEGLESTGLKVYGGVNAPYLWVKTPKGTSSWRFFDQMLYEANVVGTPGVGFGPSGEGYIRLTAFGERDDCIEAMRRIKNRL.

Substrate is bound by residues Tyr-15 and Gly-42. Pyridoxal 5'-phosphate-binding positions include Tyr-72, 108–109 (AK), Tyr-132, Asn-188, Tyr-219, and 247–249 (SFS). Residues Lys-109, Tyr-132, and Asn-188 each contribute to the substrate site. Lys-250 bears the N6-(pyridoxal phosphate)lysine mark. Residues Arg-258 and Asn-293 each coordinate pyridoxal 5'-phosphate. The substrate site is built by Asn-293 and Arg-389.

The protein belongs to the class-I pyridoxal-phosphate-dependent aminotransferase family. LL-diaminopimelate aminotransferase subfamily. Homodimer. The cofactor is pyridoxal 5'-phosphate.

The catalysed reaction is (2S,6S)-2,6-diaminopimelate + 2-oxoglutarate = (S)-2,3,4,5-tetrahydrodipicolinate + L-glutamate + H2O + H(+). The protein operates within amino-acid biosynthesis; L-lysine biosynthesis via DAP pathway; LL-2,6-diaminopimelate from (S)-tetrahydrodipicolinate (aminotransferase route): step 1/1. Its function is as follows. Involved in the synthesis of meso-diaminopimelate (m-DAP or DL-DAP), required for both lysine and peptidoglycan biosynthesis. Catalyzes the direct conversion of tetrahydrodipicolinate to LL-diaminopimelate. Can also use m-DAP instead of LL-DAP as the amino-group donor. The protein is LL-diaminopimelate aminotransferase of Bacteroides fragilis (strain ATCC 25285 / DSM 2151 / CCUG 4856 / JCM 11019 / LMG 10263 / NCTC 9343 / Onslow / VPI 2553 / EN-2).